A 306-amino-acid polypeptide reads, in one-letter code: Polyisoprenyl-teichoic acid--peptidoglycan teichoic acid transferase TagU (306 aa).

At 1–11 (MRAEKRKKKKK) the chain is on the cytoplasmic side. The helical; Signal-anchor for type II membrane protein transmembrane segment at 12–32 (ILYTIIALIGIFVLSTGSYAY) threads the bilayer. The Extracellular portion of the chain corresponds to 33-306 (YLWHKAASTV…TAELKESLNK (274 aa)).

The protein belongs to the LytR/CpsA/Psr (LCP) family.

It localises to the cell membrane. It participates in cell wall biogenesis. Functionally, may catalyze the final step in cell wall teichoic acid biosynthesis, the transfer of the anionic cell wall polymers (APs) from their lipid-linked precursor to the cell wall peptidoglycan (PG). In Bacillus licheniformis (strain ATCC 14580 / DSM 13 / JCM 2505 / CCUG 7422 / NBRC 12200 / NCIMB 9375 / NCTC 10341 / NRRL NRS-1264 / Gibson 46), this protein is Polyisoprenyl-teichoic acid--peptidoglycan teichoic acid transferase TagU.